A 918-amino-acid chain; its full sequence is Eukaryotic translation initiation factor 3 subunit C (918 aa).

Residues 1-174 are disordered; that stretch reads MSRFFKGGSS…EEEGRRVVKS (174 aa). A phosphoserine mark is found at S10, S12, S16, S19, and S20. 3 stretches are compositionally biased toward acidic residues: residues 36–47, 54–67, and 79–128; these read SSSEEESSEEES, ESSE…ESEV, and EDSE…ESDE. The residue at position 667 (T667) is a Phosphothreonine. The PCI domain maps to 681–856; sequence FHMHINLELL…GAIIFERVEI (176 aa). The disordered stretch occupies residues 879 to 918; sequence KLYEQKTQHTNPQENRRRDKGGSVKRRNERTENRNRSDMN. A compositionally biased stretch (basic and acidic residues) spans 907–918; it reads ERTENRNRSDMN.

Belongs to the eIF-3 subunit C family. Component of the eukaryotic translation initiation factor 3 (eIF-3) complex. The eIF-3 complex appears to include tif32/eif3a, SPAC25G10.08/eif3b, tif33/eif3c, SPBC4C3.07/eif3f, tif35/eif3g and sum1/eif3i. This set of common subunits may also associate exclusively with either moe1/eif3d and int6/eif3e, or with SPAC821.05/eif3h and SPAC1751.03/eif3m. The eIF-3 complex may also include SPAC3A12.13c/eif3j.

It localises to the cytoplasm. Functionally, component of the eukaryotic translation initiation factor 3 (eIF-3) complex, which is involved in protein synthesis of a specialized repertoire of mRNAs and, together with other initiation factors, stimulates binding of mRNA and methionyl-tRNAi to the 40S ribosome. The eIF-3 complex specifically targets and initiates translation of a subset of mRNAs involved in cell proliferation. The polypeptide is Eukaryotic translation initiation factor 3 subunit C (nip1) (Schizosaccharomyces pombe (strain 972 / ATCC 24843) (Fission yeast)).